We begin with the raw amino-acid sequence, 349 residues long: Quinolinate synthase (349 aa).

The iminosuccinate site is built by His52 and Ser69. Cys114 is a [4Fe-4S] cluster binding site. Iminosuccinate is bound by residues 140-142 (YVN) and Ser157. Cys201 provides a ligand contact to [4Fe-4S] cluster. Residues 227 to 229 (HPE) and Thr255 contribute to the iminosuccinate site. Cys300 lines the [4Fe-4S] cluster pocket.

It belongs to the quinolinate synthase family. Type 2 subfamily. The cofactor is [4Fe-4S] cluster.

The protein localises to the cytoplasm. The catalysed reaction is iminosuccinate + dihydroxyacetone phosphate = quinolinate + phosphate + 2 H2O + H(+). It functions in the pathway cofactor biosynthesis; NAD(+) biosynthesis; quinolinate from iminoaspartate: step 1/1. In terms of biological role, catalyzes the condensation of iminoaspartate with dihydroxyacetone phosphate to form quinolinate. The polypeptide is Quinolinate synthase (Mycobacterium bovis (strain BCG / Tokyo 172 / ATCC 35737 / TMC 1019)).